The chain runs to 96 residues: UPF0358 protein Aflv_1873 (96 aa).

It belongs to the UPF0358 family.

The chain is UPF0358 protein Aflv_1873 from Anoxybacillus flavithermus (strain DSM 21510 / WK1).